The primary structure comprises 463 residues: Polyadenylate-binding protein-interacting protein 1 (463 aa).

The disordered stretch occupies residues 1-86 (MSDGFERAPG…HKRTSPAAQL (86 aa)). The region spanning 145–362 (TEYVQDFLNH…LKLVELRSSN (218 aa)) is the MIF4G domain. The interval 420 to 442 (RDYDENGTDGGDSYFEDDDDNEM) is disordered. Positions 433-442 (YFEDDDDNEM) are enriched in acidic residues.

Interacts with the RRM1-RRM2 and C-terminal regions of epabp.

Its subcellular location is the cytoplasm. Functionally, acts as a coactivator in the regulation of translation initiation of poly(A)-containing mRNAs. The protein is Polyadenylate-binding protein-interacting protein 1 of Xenopus laevis (African clawed frog).